A 540-amino-acid chain; its full sequence is Glucose-6-phosphate isomerase (540 aa).

Glu-350 serves as the catalytic Proton donor. Active-site residues include His-381 and Lys-503.

Belongs to the GPI family.

It localises to the cytoplasm. The catalysed reaction is alpha-D-glucose 6-phosphate = beta-D-fructose 6-phosphate. It participates in carbohydrate biosynthesis; gluconeogenesis. It functions in the pathway carbohydrate degradation; glycolysis; D-glyceraldehyde 3-phosphate and glycerone phosphate from D-glucose: step 2/4. Catalyzes the reversible isomerization of glucose-6-phosphate to fructose-6-phosphate. The chain is Glucose-6-phosphate isomerase from Burkholderia pseudomallei (strain 668).